Reading from the N-terminus, the 313-residue chain is GTP cyclohydrolase 1 (313 aa).

Residues Met-1–Ser-10 show a composition bias toward basic and acidic residues. Residues Met-1–Glu-120 form a disordered region. Positions Asp-11–Pro-20 are enriched in low complexity. The segment covering Lys-29–His-39 has biased composition (basic residues). The segment covering Ser-40–Ser-64 has biased composition (basic and acidic residues). Low complexity predominate over residues Thr-72 to Ile-102. Residues Cys-202, His-205, and Cys-273 each contribute to the Zn(2+) site.

It belongs to the GTP cyclohydrolase I family. In terms of assembly, toroid-shaped homodecamer, composed of two pentamers of five dimers.

It catalyses the reaction GTP + H2O = 7,8-dihydroneopterin 3'-triphosphate + formate + H(+). It functions in the pathway cofactor biosynthesis; 7,8-dihydroneopterin triphosphate biosynthesis; 7,8-dihydroneopterin triphosphate from GTP: step 1/1. Its activity is regulated as follows. GTP shows a positive allosteric effect, and tetrahydrobiopterin inhibits the enzyme activity. GTP cyclohydrolase 1 is the first enzyme in the biosynthetic pathway leading to folic acid. The sequence is that of GTP cyclohydrolase 1 (gch-1) from Neurospora crassa (strain ATCC 24698 / 74-OR23-1A / CBS 708.71 / DSM 1257 / FGSC 987).